The sequence spans 189 residues: Glutathione-dependent formaldehyde-activating enzyme (189 aa).

Positions 20–166 constitute a CENP-V/GFA domain; sequence FAGGTLVCAC…LRTIGLEPYD (147 aa). Zn(2+)-binding residues include Cys27, Cys29, Cys48, Cys50, Cys53, Cys95, and Cys98.

Belongs to the Gfa family. The cofactor is Zn(2+).

It catalyses the reaction S-(hydroxymethyl)glutathione = glutathione + formaldehyde. It participates in one-carbon metabolism; formaldehyde degradation; formate from formaldehyde (glutathione route): step 1/3. In terms of biological role, catalyzes the condensation of formaldehyde and glutathione to S-hydroxymethylglutathione. The sequence is that of Glutathione-dependent formaldehyde-activating enzyme from Mesorhizobium japonicum (strain LMG 29417 / CECT 9101 / MAFF 303099) (Mesorhizobium loti (strain MAFF 303099)).